A 474-amino-acid chain; its full sequence is Glutathione synthetase (474 aa).

Ala2 carries the N-acetylalanine modification. Residue Arg125 participates in substrate binding. Glu144 lines the ATP pocket. Residues Glu144 and Asn146 each contribute to the Mg(2+) site. Residues 148 to 151 (ISAS), 214 to 216 (ERN), Gln220, and 267 to 270 (RDGY) each bind substrate. Residues Lys305, 364–373 (KPQREGGGNN), Tyr375, and 398–401 (MEKI) contribute to the ATP site. Glu368 is a Mg(2+) binding site. Ser415 is modified (phosphoserine). ATP is bound at residue Glu425. Residue Arg450 coordinates substrate. ATP contacts are provided by Lys452 and Asp458. 461–462 (VA) is a binding site for substrate.

It belongs to the eukaryotic GSH synthase family. In terms of assembly, homodimer. Mg(2+) serves as cofactor.

It catalyses the reaction gamma-L-glutamyl-L-cysteine + glycine + ATP = glutathione + ADP + phosphate + H(+). It carries out the reaction gamma-L-glutamyl-(2S)-2-aminobutanoate + glycine + ATP = ophthalmate + ADP + phosphate + H(+). Its pathway is sulfur metabolism; glutathione biosynthesis; glutathione from L-cysteine and L-glutamate: step 2/2. Catalyzes the production of glutathione from gamma-glutamylcysteine and glycine in an ATP-dependent manner. Glutathione (gamma-glutamylcysteinylglycine, GSH) is the most abundant intracellular thiol in living aerobic cells and is required for numerous processes including the protection of cells against oxidative damage, amino acid transport, the detoxification of foreign compounds, the maintenance of protein sulfhydryl groups in a reduced state and acts as a cofactor for a number of enzymes. Participates in ophthalmate biosynthesis in hepatocytes. In Homo sapiens (Human), this protein is Glutathione synthetase.